The sequence spans 419 residues: UDP-N-acetylglucosamine 1-carboxyvinyltransferase (419 aa).

22-23 (KN) lines the phosphoenolpyruvate pocket. Position 91 (arginine 91) interacts with UDP-N-acetyl-alpha-D-glucosamine. Cysteine 115 acts as the Proton donor in catalysis. Position 115 is a 2-(S-cysteinyl)pyruvic acid O-phosphothioketal (cysteine 115). Residues 120–124 (RPVDL), 160–163 (KVSV), aspartate 305, and valine 327 each bind UDP-N-acetyl-alpha-D-glucosamine.

It belongs to the EPSP synthase family. MurA subfamily.

Its subcellular location is the cytoplasm. The catalysed reaction is phosphoenolpyruvate + UDP-N-acetyl-alpha-D-glucosamine = UDP-N-acetyl-3-O-(1-carboxyvinyl)-alpha-D-glucosamine + phosphate. It participates in cell wall biogenesis; peptidoglycan biosynthesis. In terms of biological role, cell wall formation. Adds enolpyruvyl to UDP-N-acetylglucosamine. This chain is UDP-N-acetylglucosamine 1-carboxyvinyltransferase, found in Shigella boydii serotype 18 (strain CDC 3083-94 / BS512).